The following is a 398-amino-acid chain: Probable beta-1,3-galactosyltransferase 5 (398 aa).

The chain crosses the membrane as a helical; Signal-anchor for type II membrane protein span at residues 11-31; it reads LTMTWVPLLCISCFFLGAIFT. Asparagine 110, asparagine 115, and asparagine 206 each carry an N-linked (GlcNAc...) asparagine glycan.

Belongs to the glycosyltransferase 31 family. The cofactor is Mn(2+).

Its subcellular location is the golgi apparatus membrane. It functions in the pathway protein modification; protein glycosylation. In terms of biological role, beta-1,3-galactosyltransferase that transfers galactose from UDP-galactose to substrates with a terminal glycosyl residue. The sequence is that of Probable beta-1,3-galactosyltransferase 5 (B3GALT5) from Arabidopsis thaliana (Mouse-ear cress).